The following is a 406-amino-acid chain: Tryptophan 2,3-dioxygenase (406 aa).

Substrate contacts are provided by residues phenylalanine 72 to histidine 76 and arginine 144. Histidine 328 contributes to the heme binding site. Threonine 342 contributes to the substrate binding site.

It belongs to the tryptophan 2,3-dioxygenase family. As to quaternary structure, homotetramer. Dimer of dimers. It depends on heme as a cofactor.

The catalysed reaction is L-tryptophan + O2 = N-formyl-L-kynurenine. Its pathway is amino-acid degradation; L-tryptophan degradation via kynurenine pathway; L-kynurenine from L-tryptophan: step 1/2. Heme-dependent dioxygenase that catalyzes the oxidative cleavage of the L-tryptophan (L-Trp) pyrrole ring and converts L-tryptophan to N-formyl-L-kynurenine. Catalyzes the oxidative cleavage of the indole moiety. This Xenopus laevis (African clawed frog) protein is Tryptophan 2,3-dioxygenase.